A 111-amino-acid polypeptide reads, in one-letter code: MESSAKLTSVRLSPRKTRLVVDLVRGKVIQEALNTLRFLPQPSAKLVSKLLQSAVANAEQKGVSDVDALYVKTIYVDGGSVLKRFLPRAMGRASKIRKPTSHISVTLSDSK.

The protein belongs to the universal ribosomal protein uL22 family. Part of the 50S ribosomal subunit.

Its function is as follows. This protein binds specifically to 23S rRNA; its binding is stimulated by other ribosomal proteins, e.g. L4, L17, and L20. It is important during the early stages of 50S assembly. It makes multiple contacts with different domains of the 23S rRNA in the assembled 50S subunit and ribosome. Functionally, the globular domain of the protein is located near the polypeptide exit tunnel on the outside of the subunit, while an extended beta-hairpin is found that lines the wall of the exit tunnel in the center of the 70S ribosome. The protein is Large ribosomal subunit protein uL22 of Pelobacter propionicus (strain DSM 2379 / NBRC 103807 / OttBd1).